Here is a 170-residue protein sequence, read N- to C-terminus: Flavin reductase (170 aa).

Residues S51, H138, and F159–G162 contribute to the NAD(+) site.

It belongs to the non-flavoprotein flavin reductase family. In terms of assembly, homodimer. Likely forms a loose transient complex with monooxygenases for which it provides FMNH(2).

The catalysed reaction is FMNH2 + NAD(+) = FMN + NADH + 2 H(+). It carries out the reaction FADH2 + NAD(+) = FAD + NADH + 2 H(+). In terms of biological role, catalyzes the reduction of FMN, and to a lesser extent, FAD, using NADH as an electron donor. Is able to provide the FMNH(2) required for the Baeyer-Villiger oxidations catalyzed by 2,5-diketocamphane monooxygenases and 3,6-diketocamphane monooxygenase. NADPH acts as a very poor cosubstrate. The protein is Flavin reductase of Pseudomonas putida (Arthrobacter siderocapsulatus).